The chain runs to 135 residues: Large ribosomal subunit protein uL16c (135 aa).

Belongs to the universal ribosomal protein uL16 family. Part of the 50S ribosomal subunit.

It localises to the plastid. The protein localises to the chloroplast. In Phaseolus vulgaris (Kidney bean), this protein is Large ribosomal subunit protein uL16c.